Consider the following 321-residue polypeptide: Ribosomal RNA small subunit methyltransferase H (321 aa).

S-adenosyl-L-methionine contacts are provided by residues 40-42 (GGH), Asp60, Phe84, Asp106, and Gln113.

This sequence belongs to the methyltransferase superfamily. RsmH family.

The protein localises to the cytoplasm. It carries out the reaction cytidine(1402) in 16S rRNA + S-adenosyl-L-methionine = N(4)-methylcytidine(1402) in 16S rRNA + S-adenosyl-L-homocysteine + H(+). Its function is as follows. Specifically methylates the N4 position of cytidine in position 1402 (C1402) of 16S rRNA. The sequence is that of Ribosomal RNA small subunit methyltransferase H from Histophilus somni (strain 2336) (Haemophilus somnus).